The chain runs to 375 residues: Coproporphyrin III ferrochelatase (375 aa).

Serine 59 and tyrosine 128 together coordinate Fe-coproporphyrin III. Positions 191 and 286 each coordinate Fe(2+).

The protein belongs to the ferrochelatase family.

Its subcellular location is the cytoplasm. The enzyme catalyses Fe-coproporphyrin III + 2 H(+) = coproporphyrin III + Fe(2+). It functions in the pathway porphyrin-containing compound metabolism; protoheme biosynthesis. In terms of biological role, involved in coproporphyrin-dependent heme b biosynthesis. Catalyzes the insertion of ferrous iron into coproporphyrin III to form Fe-coproporphyrin III. In Streptomyces coelicolor (strain ATCC BAA-471 / A3(2) / M145), this protein is Coproporphyrin III ferrochelatase.